Consider the following 468-residue polypeptide: Anthocyanidin 3-O-glucoside 2'''-O-xylosyltransferase (468 aa).

UDP-alpha-D-xylose contacts are provided by residues Ser-284, 344–346 (IQQ), 361–369 (HCGFGSMWE), and 383–386 (HGEQ).

It belongs to the UDP-glycosyltransferase family.

The catalysed reaction is an anthocyanidin 3-O-beta-D-glucoside + UDP-alpha-D-xylose = an anthocyanidin 3-O-beta-D-sambubioside + UDP + 2 H(+). Its pathway is secondary metabolite biosynthesis; flavonoid biosynthesis. Its function is as follows. Contributes to the last few anthocyanin biosynthetic steps. Converts cyanidin 3-O-glucoside to cyanidin 3-O-xylosyl(1-&gt;2)glucoside. Can use 3-O-glucosylated anthocyanidins/flavonols and uridine diphosphate (UDP)-xylose as substrates. The polypeptide is Anthocyanidin 3-O-glucoside 2'''-O-xylosyltransferase (A3G2XYLT) (Arabidopsis thaliana (Mouse-ear cress)).